Consider the following 250-residue polypeptide: Proteasome subunit alpha type-4 (250 aa).

The protein belongs to the peptidase T1A family. The 26S proteasome consists of a 20S proteasome core and two 19S regulatory subunits. The 20S proteasome core is composed of 28 subunits that are arranged in four stacked rings, resulting in a barrel-shaped structure. The two end rings are each formed by seven alpha subunits, and the two central rings are each formed by seven beta subunits. The catalytic chamber with the active sites is on the inside of the barrel.

The protein localises to the cytoplasm. It localises to the nucleus. Functionally, the proteasome is a multicatalytic proteinase complex which is characterized by its ability to cleave peptides with Arg, Phe, Tyr, Leu, and Glu adjacent to the leaving group at neutral or slightly basic pH. The proteasome has an ATP-dependent proteolytic activity. In Spinacia oleracea (Spinach), this protein is Proteasome subunit alpha type-4 (PAC1).